Reading from the N-terminus, the 869-residue chain is Dynamin-3 (869 aa).

Positions 28–294 constitute a Dynamin-type G domain; sequence LLELPQIAVV…LTNHIRDTLP (267 aa). The tract at residues 38–45 is G1 motif; it reads GGQSAGKS. Position 38–46 (38–46) interacts with GTP; that stretch reads GGQSAGKSS. The G2 motif stretch occupies residues 64 to 66; the sequence is VTR. Positions 136 to 139 are G3 motif; it reads DLPG. The G4 motif stretch occupies residues 205–208; the sequence is TKLD. 205–211 is a GTP binding site; that stretch reads TKLDLMD. Tyrosine 231 carries the phosphotyrosine modification. The G5 motif stretch occupies residues 235-238; sequence VNRS. 236 to 239 serves as a coordination point for GTP; that stretch reads NRSQ. Lysine 299 bears the N6-acetyllysine mark. In terms of domain architecture, PH spans 525-631; that stretch reads IVIRKGWLTV…WKASLLRAGV (107 aa). Position 603 is a phosphotyrosine (tyrosine 603). Lysine 604 is modified (N6-acetyllysine). In terms of domain architecture, GED spans 659–750; sequence VETIRNLVDS…IIGDINTVTV (92 aa). The tract at residues 752–869 is disordered; sequence TPAPPPVDDS…IRPLESSLLD (118 aa). Serine 769 and serine 773 each carry phosphoserine. Residues 775–796 are compositionally biased toward low complexity; sequence TTQRRLTLSAPLPRPASSRGPA. Pro residues-rich tracts occupy residues 797–822 and 832–855; these read PAIP…PPFP and PQVP…PSPT. The residue at position 853 (serine 853) is a Phosphoserine.

It belongs to the TRAFAC class dynamin-like GTPase superfamily. Dynamin/Fzo/YdjA family. In terms of tissue distribution, isoform-specific expression in germ-cell-depleted testis (Sertoli cells), brain (peripheral sensory neurons), lung and heart.

It localises to the cytoplasm. Its subcellular location is the cytoskeleton. The protein localises to the cytoplasmic vesicle. The protein resides in the golgi apparatus. The enzyme catalyses GTP + H2O = GDP + phosphate + H(+). Functionally, microtubule-associated force-producing protein involved in producing microtubule bundles and able to bind and hydrolyze GTP. Most probably involved in vesicular trafficking processes, in particular endocytosis. This is Dynamin-3 (Dnm3) from Rattus norvegicus (Rat).